The primary structure comprises 156 residues: C-type lectin lectoxin-Phi1 (156 aa).

Positions 1–23 (MGRFIFVSLGLLVLAFSLSGIGA) are cleaved as a signal peptide. Disulfide bonds link C27–C38, C55–C154, and C129–C146. A C-type lectin domain is found at 34-155 (HNVSCYKLIN…CNRRHRFLCK (122 aa)). 2 N-linked (GlcNAc...) asparagine glycosylation sites follow: N35 and N109. A Mannose-binding motif is present at residues 119–121 (EPN). Ca(2+)-binding residues include E127, N142, and D143.

It belongs to the true venom lectin family. Expressed by the venom gland.

It localises to the secreted. Its function is as follows. Mannose-binding lectin which recognizes specific carbohydrate structures and agglutinates a variety of animal cells by binding to cell-surface glycoproteins and glycolipids. May be a calcium-dependent lectin. In Philodryas olfersii (Green snake), this protein is C-type lectin lectoxin-Phi1.